A 365-amino-acid polypeptide reads, in one-letter code: Mitochondrial protein C2orf69 homolog (365 aa).

The N-terminal 24 residues, 1 to 24 (MLGSRRLRSPALVLLLLRPLLASG), are a transit peptide targeting the mitochondrion. The segment at 28 to 64 (SRLQTRAMNPGGGERGSPEDSHRLQRSTVPGSDPQRS) is disordered. The span at 53 to 64 (RSTVPGSDPQRS) shows a compositional bias: polar residues.

The protein belongs to the C2orf69 family.

It localises to the mitochondrion matrix. Its function is as follows. May play a role in the respiratory chain. This is Mitochondrial protein C2orf69 homolog from Mus musculus (Mouse).